The primary structure comprises 506 residues: MQLTLWTYEGPPHIGAMRVAAAMNGLHYVLHAPQGDTYADLLFTMIERRDSRPPVTYTTFQARDLGADTAELFKRAAAEAYARFRPQAMIVGASCTAELLQDDPAGLARALGLPIPVIPLDLPAYQRKENWGASETFYRLVRALAGPPAARPARAVRSCNILGPTALGFRNRDDLREVRQLLDRLGIPVNVVAPLGASPADLARLGEADFNVVLYPEVARAAAQFLERTHRQPFVEIAPIGVRATRAFVEAVAARAGVDPAPVLADEGSRLPWYARSVDSTYLTGKRVFVFGDATHAVAAARVATAELGFALVGLGTYAREFAREVREEAEAHGLTALVSDDYLAVEEAIAAAQPELVLGTQMERHIAKRLGIPCAVISAPMHVQDVPARHAPQMGFEGANVLFDTLVHPLMMGLEEHLLAMFRDDPEFHDGVAPSHLGGTARDLPAAAPQPAALVWAIEAERELKKVPFFVRGKARSNTERFARERSLPLITVETLYDAKAHFSR.

D36 contacts [4Fe-4S] cluster. Residue D279 is the Proton donor of the active site. 414-415 contacts substrate; sequence GL.

It belongs to the ChlB/BchB/BchZ family. In terms of assembly, protochlorophyllide reductase is composed of three subunits; BchL, BchN and BchB. Forms a heterotetramer of two BchB and two BchN subunits. [4Fe-4S] cluster serves as cofactor.

It catalyses the reaction chlorophyllide a + oxidized 2[4Fe-4S]-[ferredoxin] + 2 ADP + 2 phosphate = protochlorophyllide a + reduced 2[4Fe-4S]-[ferredoxin] + 2 ATP + 2 H2O. Its pathway is porphyrin-containing compound metabolism; bacteriochlorophyll biosynthesis (light-independent). Its function is as follows. Component of the dark-operative protochlorophyllide reductase (DPOR) that uses Mg-ATP and reduced ferredoxin to reduce ring D of protochlorophyllide (Pchlide) to form chlorophyllide a (Chlide). This reaction is light-independent. The NB-protein (BchN-BchB) is the catalytic component of the complex. The polypeptide is Light-independent protochlorophyllide reductase subunit B (Methylobacterium sp. (strain 4-46)).